Reading from the N-terminus, the 375-residue chain is Succinyl-diaminopimelate desuccinylase (375 aa).

Histidine 66 lines the Zn(2+) pocket. Aspartate 68 is an active-site residue. Aspartate 99 provides a ligand contact to Zn(2+). The active-site Proton acceptor is the glutamate 133. Zn(2+)-binding residues include glutamate 134, glutamate 162, and histidine 348.

The protein belongs to the peptidase M20A family. DapE subfamily. In terms of assembly, homodimer. Requires Zn(2+) as cofactor. It depends on Co(2+) as a cofactor.

The enzyme catalyses N-succinyl-(2S,6S)-2,6-diaminopimelate + H2O = (2S,6S)-2,6-diaminopimelate + succinate. It participates in amino-acid biosynthesis; L-lysine biosynthesis via DAP pathway; LL-2,6-diaminopimelate from (S)-tetrahydrodipicolinate (succinylase route): step 3/3. Functionally, catalyzes the hydrolysis of N-succinyl-L,L-diaminopimelic acid (SDAP), forming succinate and LL-2,6-diaminopimelate (DAP), an intermediate involved in the bacterial biosynthesis of lysine and meso-diaminopimelic acid, an essential component of bacterial cell walls. The polypeptide is Succinyl-diaminopimelate desuccinylase (Citrobacter koseri (strain ATCC BAA-895 / CDC 4225-83 / SGSC4696)).